Here is a 346-residue protein sequence, read N- to C-terminus: Methionine import ATP-binding protein MetN 1 (346 aa).

The ABC transporter domain maps to 2-241; the sequence is IELKNVSKVF…PQHVTTKKFV (240 aa). Residue 38-45 coordinates ATP; sequence GYSGAGKS.

The protein belongs to the ABC transporter superfamily. Methionine importer (TC 3.A.1.24) family. As to quaternary structure, the complex is composed of two ATP-binding proteins (MetN), two transmembrane proteins (MetI) and a solute-binding protein (MetQ).

The protein resides in the cell membrane. The enzyme catalyses L-methionine(out) + ATP + H2O = L-methionine(in) + ADP + phosphate + H(+). It catalyses the reaction D-methionine(out) + ATP + H2O = D-methionine(in) + ADP + phosphate + H(+). Functionally, part of the ABC transporter complex MetNIQ involved in methionine import. Responsible for energy coupling to the transport system. The sequence is that of Methionine import ATP-binding protein MetN 1 from Bacillus cereus (strain ATCC 14579 / DSM 31 / CCUG 7414 / JCM 2152 / NBRC 15305 / NCIMB 9373 / NCTC 2599 / NRRL B-3711).